Consider the following 437-residue polypeptide: Serine hydroxymethyltransferase (437 aa).

Residues Leu130 and Gly134–Leu136 each bind (6S)-5,6,7,8-tetrahydrofolate. Lys239 bears the N6-(pyridoxal phosphate)lysine mark.

The protein belongs to the SHMT family. In terms of assembly, homodimer. It depends on pyridoxal 5'-phosphate as a cofactor.

The protein resides in the cytoplasm. The enzyme catalyses (6R)-5,10-methylene-5,6,7,8-tetrahydrofolate + glycine + H2O = (6S)-5,6,7,8-tetrahydrofolate + L-serine. Its pathway is one-carbon metabolism; tetrahydrofolate interconversion. The protein operates within amino-acid biosynthesis; glycine biosynthesis; glycine from L-serine: step 1/1. Its function is as follows. Catalyzes the reversible interconversion of serine and glycine with tetrahydrofolate (THF) serving as the one-carbon carrier. This reaction serves as the major source of one-carbon groups required for the biosynthesis of purines, thymidylate, methionine, and other important biomolecules. Also exhibits THF-independent aldolase activity toward beta-hydroxyamino acids, producing glycine and aldehydes, via a retro-aldol mechanism. This Bartonella tribocorum (strain CIP 105476 / IBS 506) protein is Serine hydroxymethyltransferase.